A 279-amino-acid polypeptide reads, in one-letter code: Putative potassium channel regulatory protein (279 aa).

A BTB domain is found at 5 to 74; the sequence is ELVTLNVGGM…VRTSQLSLPS (70 aa). The interval 256–279 is disordered; it reads ENSRQENYETETVQVKQAKPNKKR.

Its subcellular location is the endoplasmic reticulum. Its function is as follows. Inhibits potassium fluxes in cells, possibly by retaining potassium channels in the cytoplasm. In Xenopus tropicalis (Western clawed frog), this protein is Putative potassium channel regulatory protein (kcnrg).